A 188-amino-acid polypeptide reads, in one-letter code: Peptidyl-tRNA hydrolase (188 aa).

Position 14 (Y14) interacts with tRNA. Residue H19 is the Proton acceptor of the active site. TRNA-binding residues include F64, N66, and N112.

Belongs to the PTH family. Monomer.

The protein resides in the cytoplasm. The enzyme catalyses an N-acyl-L-alpha-aminoacyl-tRNA + H2O = an N-acyl-L-amino acid + a tRNA + H(+). In terms of biological role, hydrolyzes ribosome-free peptidyl-tRNAs (with 1 or more amino acids incorporated), which drop off the ribosome during protein synthesis, or as a result of ribosome stalling. Functionally, catalyzes the release of premature peptidyl moieties from peptidyl-tRNA molecules trapped in stalled 50S ribosomal subunits, and thus maintains levels of free tRNAs and 50S ribosomes. In Enterococcus faecalis (strain ATCC 700802 / V583), this protein is Peptidyl-tRNA hydrolase.